The primary structure comprises 503 residues: Pentatricopeptide repeat-containing protein At2g30100, chloroplastic (503 aa).

The N-terminal 50 residues, 1-50 (MAYAHVFASLTISTISLRRFLPRLHRNHSVKPNSRIICNLKLNYSAGKFR), are a transit peptide targeting the chloroplast. PPR repeat units follow at residues 341–375 (IGVV…GREP), 376–410 (EADL…GSQR), and 411–445 (KKKT…GLHP).

Belongs to the PPR family. P subfamily.

Its subcellular location is the plastid. It localises to the chloroplast. The polypeptide is Pentatricopeptide repeat-containing protein At2g30100, chloroplastic (Arabidopsis thaliana (Mouse-ear cress)).